Reading from the N-terminus, the 87-residue chain is Phosphoribosyl-ATP pyrophosphatase (87 aa).

It belongs to the PRA-PH family.

The protein resides in the cytoplasm. The catalysed reaction is 1-(5-phospho-beta-D-ribosyl)-ATP + H2O = 1-(5-phospho-beta-D-ribosyl)-5'-AMP + diphosphate + H(+). It participates in amino-acid biosynthesis; L-histidine biosynthesis; L-histidine from 5-phospho-alpha-D-ribose 1-diphosphate: step 2/9. This Bifidobacterium longum (strain DJO10A) protein is Phosphoribosyl-ATP pyrophosphatase.